The primary structure comprises 146 residues: Protein archease (146 aa).

Positions 16, 145, and 146 each coordinate Ca(2+).

Belongs to the archease family.

Its function is as follows. Activates the tRNA-splicing ligase complex by facilitating the enzymatic turnover of catalytic subunit RtcB. Acts by promoting the guanylylation of RtcB, a key intermediate step in tRNA ligation. Can also alter the NTP specificity of RtcB such that ATP, dGTP or ITP is used efficiently. This chain is Protein archease, found in Methanosarcina mazei (strain ATCC BAA-159 / DSM 3647 / Goe1 / Go1 / JCM 11833 / OCM 88) (Methanosarcina frisia).